A 301-amino-acid chain; its full sequence is Small ribosomal subunit protein uS2 (301 aa).

The protein belongs to the universal ribosomal protein uS2 family. In terms of assembly, component of the small ribosomal subunit. Mature ribosomes consist of a small (40S) and a large (60S) subunit. The 40S subunit contains about 33 different proteins and 1 molecule of RNA (18S). The 60S subunit contains about 49 different proteins and 3 molecules of RNA (28S, 5.8S and 5S). Interacts with ribosomal protein S21.

It is found in the cytoplasm. Its function is as follows. Required for the assembly and/or stability of the 40S ribosomal subunit. Required for the processing of the 20S rRNA-precursor to mature 18S rRNA in a late step of the maturation of 40S ribosomal subunits. This is Small ribosomal subunit protein uS2 from Brugia malayi (Filarial nematode worm).